Consider the following 303-residue polypeptide: Protease HtpX (303 aa).

The next 2 helical transmembrane spans lie at 4 to 24 (IGLF…VFGI) and 42 to 62 (IASL…ISLF). His149 is a Zn(2+) binding site. The active site involves Glu150. His153 contributes to the Zn(2+) binding site. 2 consecutive transmembrane segments (helical) span residues 157 to 177 (GDMV…MFFA) and 200 to 220 (FVTS…IVMW). Glu226 lines the Zn(2+) pocket.

It belongs to the peptidase M48B family. Zn(2+) serves as cofactor.

It localises to the cell inner membrane. The chain is Protease HtpX from Psychrobacter sp. (strain PRwf-1).